A 432-amino-acid polypeptide reads, in one-letter code: Dihydroorotase (432 aa).

2 residues coordinate Zn(2+): histidine 60 and histidine 62. Residues 62 to 64 (HLR) and asparagine 94 contribute to the substrate site. Aspartate 152, histidine 179, and histidine 232 together coordinate Zn(2+). A substrate-binding site is contributed by asparagine 278. A Zn(2+)-binding site is contributed by aspartate 305. Aspartate 305 is a catalytic residue. Substrate contacts are provided by residues histidine 309 and 323 to 324 (FG).

This sequence belongs to the metallo-dependent hydrolases superfamily. DHOase family. Class I DHOase subfamily. Requires Zn(2+) as cofactor.

It catalyses the reaction (S)-dihydroorotate + H2O = N-carbamoyl-L-aspartate + H(+). Its pathway is pyrimidine metabolism; UMP biosynthesis via de novo pathway; (S)-dihydroorotate from bicarbonate: step 3/3. Catalyzes the reversible cyclization of carbamoyl aspartate to dihydroorotate. In Elusimicrobium minutum (strain Pei191), this protein is Dihydroorotase.